Consider the following 556-residue polypeptide: U3 small nucleolar RNA-associated protein 18 homolog (556 aa).

A compositionally biased stretch (basic residues) spans 1–24; the sequence is MPPERRRRMKLDRRTGAKPKRKPG. A disordered region spans residues 1–70; the sequence is MPPERRRRMK…IAVAAAEEER (70 aa). Residues 43 to 65 are compositionally biased toward low complexity; sequence APSSQRKPPARPSAAAAAIAVAA. Lys84 participates in a covalent cross-link: Glycyl lysine isopeptide (Lys-Gly) (interchain with G-Cter in SUMO2). A disordered region spans residues 111-143; that stretch reads RGPRVQEHEDSGDSEVENEAKGNFPPQKKPVWV. Phosphoserine is present on residues Ser121 and Ser124. Glycyl lysine isopeptide (Lys-Gly) (interchain with G-Cter in SUMO2) cross-links involve residues Lys183 and Lys201. Residues 193 to 219 form a disordered region; that stretch reads VPAWAETTKRKTSSDDESEEDEDDLLQ. Thr204 carries the post-translational modification Phosphothreonine. Phosphoserine occurs at positions 205, 206, and 210. A compositionally biased stretch (acidic residues) spans 207 to 216; it reads DDESEEDEDD. Thr221 carries the phosphothreonine modification. WD repeat units follow at residues 249–288, 293–333, 339–380, 381–419, 421–462, and 471–512; these read PTVA…NPKI, LERF…LIPV, LKEK…GSMK, INGR…CLNR, VDEG…QETN, and NLVT…VFSN. A Glycyl lysine isopeptide (Lys-Gly) (interchain with G-Cter in SUMO2) cross-link involves residue Lys517.

Belongs to the WD repeat UTP18 family. In terms of assembly, part of the small subunit (SSU) processome, composed of more than 70 proteins and the RNA chaperone small nucleolar RNA (snoRNA) U3.

It is found in the nucleus. The protein resides in the nucleolus. Functionally, part of the small subunit (SSU) processome, first precursor of the small eukaryotic ribosomal subunit. During the assembly of the SSU processome in the nucleolus, many ribosome biogenesis factors, an RNA chaperone and ribosomal proteins associate with the nascent pre-rRNA and work in concert to generate RNA folding, modifications, rearrangements and cleavage as well as targeted degradation of pre-ribosomal RNA by the RNA exosome. Involved in nucleolar processing of pre-18S ribosomal RNA. The chain is U3 small nucleolar RNA-associated protein 18 homolog from Homo sapiens (Human).